We begin with the raw amino-acid sequence, 105 residues long: ATMTLTDANFQQAIQGDKPVLVDFWAAWCGPCRMMAPVLEEFAEAHADKVTVAKLNVDENPETTSQFGIMSIPTLILFKGGRPVKQLIGYQPKEQLEAQLADVLQ.

A Thioredoxin domain is found at 1 to 105; that stretch reads ATMTLTDANF…LEAQLADVLQ (105 aa). An intrachain disulfide couples Cys29 to Cys32.

Functionally, participates in various redox reactions through the reversible oxidation of its active center dithiol to a disulfide and catalyzes dithiol-disulfide exchange reactions. The sequence is that of Thioredoxin (trxA) from Alicyclobacillus acidocaldarius subsp. acidocaldarius (Bacillus acidocaldarius).